We begin with the raw amino-acid sequence, 187 residues long: NADH-dependent FMN reductase SfnF (187 aa).

It belongs to the SsuE family.

It carries out the reaction FMNH2 + NAD(+) = FMN + NADH + 2 H(+). Its function is as follows. Involved in the dimethyl sulfide degradation pathway. Catalyzes the NADH-dependent reduction of FMN. In Pseudomonas fluorescens (strain Pf0-1), this protein is NADH-dependent FMN reductase SfnF.